We begin with the raw amino-acid sequence, 602 residues long: Elongation factor 4 (602 aa).

The tr-type G domain maps to 8–189 (KNIRNFSIIA…KIITTIPAPS (182 aa)). GTP contacts are provided by residues 20–25 (DHGKST) and 136–139 (NKID).

It belongs to the TRAFAC class translation factor GTPase superfamily. Classic translation factor GTPase family. LepA subfamily.

Its subcellular location is the cell inner membrane. It carries out the reaction GTP + H2O = GDP + phosphate + H(+). Its function is as follows. Required for accurate and efficient protein synthesis under certain stress conditions. May act as a fidelity factor of the translation reaction, by catalyzing a one-codon backward translocation of tRNAs on improperly translocated ribosomes. Back-translocation proceeds from a post-translocation (POST) complex to a pre-translocation (PRE) complex, thus giving elongation factor G a second chance to translocate the tRNAs correctly. Binds to ribosomes in a GTP-dependent manner. This chain is Elongation factor 4, found in Helicobacter pylori (strain G27).